The sequence spans 80 residues: uncharacterized protein (80 aa).

3 helical membrane-spanning segments follow: residues 2–22, 32–52, and 55–75; these read INLW…IGQV, FFGM…LTGG, and LVTG…RFMV.

It is found in the cell membrane. This is an uncharacterized protein from Escherichia coli (strain K12).